A 638-amino-acid chain; its full sequence is Autolysin (638 aa).

Residues 1–28 (MSLATRRFGAAAALLVAACVLCTAPAWA) form the signal peptide. Positions 29 to 183 (QNETTGTGMV…LKSILKGSQK (155 aa)) are cleaved as a propeptide — activation peptide. N30 carries N-linked (GlcNAc...) asparagine glycosylation. The Cysteine switch motif lies at 95–102 (PRCNVPRA). C97 serves as a coordination point for Zn(2+). N-linked (GlcNAc...) asparagine glycosylation is present at N126. Positions 269–292 (VTPPPRPPRPPRPPPRAGSTISSL) are disordered. The segment covering 270-284 (TPPPRPPRPPRPPPR) has biased composition (pro residues). The N-linked (GlcNAc...) asparagine glycan is linked to N296. H396 provides a ligand contact to Zn(2+). E397 is a catalytic residue. Zn(2+) contacts are provided by H400 and H406. N458, N465, N470, and N523 each carry an N-linked (GlcNAc...) asparagine glycan.

It belongs to the peptidase M11 family. Zn(2+) is required as a cofactor. Present in 2 forms: an inactive V-form in vegetative cells and an active and soluble G-form. The V-form enzyme may be converted to the G-form enzyme during gametic differentiation under nitrogen-starved conditions.

It localises to the periplasm. The protein localises to the secreted. It is found in the cell wall. The catalysed reaction is Cleavage of the proline- and hydroxyproline-rich proteins of the Chlamydomonas cell wall. Also cleaves azocasein, gelatin and Leu-Trp-Met-|-Arg-Phe-Ala.. Mediates digestion of the cell walls of the 2 mating type gametes during mating as a necessary prelude to cell fusion. This enzyme acts specifically on the framework proteins (inner wall) of the cell wall, cleaving several model peptides at specific sites. This is Autolysin from Chlamydomonas reinhardtii (Chlamydomonas smithii).